A 904-amino-acid polypeptide reads, in one-letter code: Protein translocase subunit SecA (904 aa).

Residues glutamine 87, 105–109 (GEGKT), and aspartate 507 each bind ATP. Positions 865-887 (GEGAEAAGQQPADAGPKIGRNDP) are disordered. Positions 868 to 880 (AEAAGQQPADAGP) are enriched in low complexity. The Zn(2+) site is built by cysteine 888, cysteine 890, cysteine 899, and histidine 900.

This sequence belongs to the SecA family. As to quaternary structure, monomer and homodimer. Part of the essential Sec protein translocation apparatus which comprises SecA, SecYEG and auxiliary proteins SecDF-YajC and YidC. Zn(2+) is required as a cofactor.

Its subcellular location is the cell inner membrane. The protein resides in the cytoplasm. The catalysed reaction is ATP + H2O + cellular proteinSide 1 = ADP + phosphate + cellular proteinSide 2.. In terms of biological role, part of the Sec protein translocase complex. Interacts with the SecYEG preprotein conducting channel. Has a central role in coupling the hydrolysis of ATP to the transfer of proteins into and across the cell membrane, serving both as a receptor for the preprotein-SecB complex and as an ATP-driven molecular motor driving the stepwise translocation of polypeptide chains across the membrane. This is Protein translocase subunit SecA from Dechloromonas aromatica (strain RCB).